A 114-amino-acid polypeptide reads, in one-letter code: Flagellar hook-basal body complex protein FliE (114 aa).

This sequence belongs to the FliE family.

It is found in the bacterial flagellum basal body. This is Flagellar hook-basal body complex protein FliE from Burkholderia lata (strain ATCC 17760 / DSM 23089 / LMG 22485 / NCIMB 9086 / R18194 / 383).